The primary structure comprises 332 residues: L-lactate dehydrogenase C chain (332 aa).

NAD(+)-binding positions include 29–57 (GAVG…AVDK) and Arg99. Substrate-binding residues include Arg106, Asn138, and Arg169. Asn138 is an NAD(+) binding site. Catalysis depends on His193, which acts as the Proton acceptor. Thr248 lines the substrate pocket. Ser301 is modified (phosphoserine).

It belongs to the LDH/MDH superfamily. LDH family. Homotetramer. Interacts with RABL2/RABL2A; binds preferentially to GTP-bound RABL2.

The protein localises to the cytoplasm. The enzyme catalyses (S)-lactate + NAD(+) = pyruvate + NADH + H(+). It participates in fermentation; pyruvate fermentation to lactate; (S)-lactate from pyruvate: step 1/1. Its function is as follows. Possible role in sperm motility. This Sus scrofa (Pig) protein is L-lactate dehydrogenase C chain (LDHC).